We begin with the raw amino-acid sequence, 141 residues long: Hemoglobin subunit alpha (141 aa).

The region spanning 1-141 (VLSPADKTNV…VSTVLTSKYR (141 aa)) is the Globin domain. Phosphoserine is present on Ser3. Lys7 bears the N6-succinyllysine mark. At Thr8 the chain carries Phosphothreonine. At Lys11 the chain carries N6-succinyllysine. At Lys16 the chain carries N6-acetyllysine; alternate. Position 16 is an N6-succinyllysine; alternate (Lys16). Tyr24 is modified (phosphotyrosine). Ser35 carries the phosphoserine modification. At Lys40 the chain carries N6-succinyllysine. Ser49 is modified (phosphoserine). His58 contributes to the O2 binding site. His87 contributes to the heme b binding site. Ser102 is modified (phosphoserine). Residue Thr108 is modified to Phosphothreonine. 2 positions are modified to phosphoserine: Ser124 and Ser131. Residues Thr134 and Thr137 each carry the phosphothreonine modification. The residue at position 138 (Ser138) is a Phosphoserine.

It belongs to the globin family. Heterotetramer of two alpha chains and two beta chains. As to expression, red blood cells.

Its function is as follows. Involved in oxygen transport from the lung to the various peripheral tissues. Functionally, hemopressin acts as an antagonist peptide of the cannabinoid receptor CNR1. Hemopressin-binding efficiently blocks cannabinoid receptor CNR1 and subsequent signaling. The polypeptide is Hemoglobin subunit alpha (HBA) (Cebus capucinus (White-faced sapajou)).